The following is a 210-amino-acid chain: 7-methyl-GTP pyrophosphatase (210 aa).

Asp79 acts as the Proton acceptor in catalysis.

This sequence belongs to the Maf family. YceF subfamily. Requires a divalent metal cation as cofactor.

The protein localises to the cytoplasm. It carries out the reaction N(7)-methyl-GTP + H2O = N(7)-methyl-GMP + diphosphate + H(+). Its function is as follows. Nucleoside triphosphate pyrophosphatase that hydrolyzes 7-methyl-GTP (m(7)GTP). May have a dual role in cell division arrest and in preventing the incorporation of modified nucleotides into cellular nucleic acids. The protein is 7-methyl-GTP pyrophosphatase of Burkholderia orbicola (strain AU 1054).